The primary structure comprises 285 residues: MITSKTSFLALIGNPVSHSLSPIMQNAAIQYLGLDLIYMAIPCKNEDLEIVVNSIKKMNCKGLNITIPFKQKVFDMCSEISPVAKKVKAINTLKLNDNKNWIGTNTDIDGFIYPLKNLNLIKKSSLILGSGGAARSVIQGLIELKLSKITIISRKRNSLNELITNFKNDIEIKGLLSTNNEIKNLIQETDLIINTTPVGMSNTTNTDELPFGQGFWDSINSKTIVYDLIYNPSPTPFLKFCDKKGCMTIDGTQMLIAQGAKSLSFWTNGLEVPYEVMHDALKEYL.

Residues 19 to 21 (SLS) and Thr-66 each bind shikimate. The Proton acceptor role is filled by Lys-70. Shikimate is bound by residues Asn-91 and Asp-107. NADP(+) contacts are provided by residues 129 to 133 (GSGGA) and Leu-228. Residue Tyr-230 participates in shikimate binding. Gly-251 serves as a coordination point for NADP(+).

The protein belongs to the shikimate dehydrogenase family. Homodimer.

The enzyme catalyses shikimate + NADP(+) = 3-dehydroshikimate + NADPH + H(+). The protein operates within metabolic intermediate biosynthesis; chorismate biosynthesis; chorismate from D-erythrose 4-phosphate and phosphoenolpyruvate: step 4/7. Its function is as follows. Involved in the biosynthesis of the chorismate, which leads to the biosynthesis of aromatic amino acids. Catalyzes the reversible NADPH linked reduction of 3-dehydroshikimate (DHSA) to yield shikimate (SA). The protein is Shikimate dehydrogenase (NADP(+)) of Prochlorococcus marinus subsp. pastoris (strain CCMP1986 / NIES-2087 / MED4).